The chain runs to 403 residues: Accessory Sec system protein translocase subunit SecY2 (403 aa).

A run of 10 helical transmembrane segments spans residues 17 to 37 (MLYT…SIVS), 63 to 83 (LNIF…LMLI), 105 to 125 (ILTL…YVSK), 131 to 151 (DNIY…VWLA), 157 to 177 (YGIA…MMHQ), 186 to 206 (HIVI…LLFI), 240 to 260 (ITLM…HFIL), 276 to 296 (FDSP…GYFL), 339 to 359 (WFGS…TLFV), and 366 to 386 (IYFS…AETI).

Belongs to the SecY/SEC61-alpha family. SecY2 subfamily. As to quaternary structure, component of the accessory SecA2/SecY2 protein translocase complex required to export cell wall proteins. May form heterotrimers with SecE and SecG subunits.

It is found in the cell membrane. Functionally, part of the accessory SecA2/SecY2 system specifically required for export of possible cell wall proteins. The central subunit of a protein translocation channel. The polypeptide is Accessory Sec system protein translocase subunit SecY2 (Staphylococcus aureus (strain N315)).